The following is a 456-amino-acid chain: Probable glycine dehydrogenase (decarboxylating) subunit 1 (456 aa).

Belongs to the GcvP family. N-terminal subunit subfamily. The glycine cleavage system is composed of four proteins: P, T, L and H. In this organism, the P 'protein' is a heterodimer of two subunits.

It catalyses the reaction N(6)-[(R)-lipoyl]-L-lysyl-[glycine-cleavage complex H protein] + glycine + H(+) = N(6)-[(R)-S(8)-aminomethyldihydrolipoyl]-L-lysyl-[glycine-cleavage complex H protein] + CO2. The glycine cleavage system catalyzes the degradation of glycine. The P protein binds the alpha-amino group of glycine through its pyridoxal phosphate cofactor; CO(2) is released and the remaining methylamine moiety is then transferred to the lipoamide cofactor of the H protein. The sequence is that of Probable glycine dehydrogenase (decarboxylating) subunit 1 from Legionella pneumophila (strain Corby).